A 219-amino-acid chain; its full sequence is uncharacterized protein (219 aa).

A helical membrane pass occupies residues 28–50 (IVSSLIAGGYALFVSAFTSYVYT). A coiled-coil region spans residues 155 to 218 (EILRESLSEI…EEIEKELEFF (64 aa)).

The protein resides in the membrane. This is an uncharacterized protein from Aquifex aeolicus (strain VF5).